The sequence spans 536 residues: Enterobactin synthase component E (536 aa).

Residues Asn235, Ser240, Gly309, Val331, Ala335, Asp415, and Lys432 each contribute to the substrate site. A phosphopantetheine binding region spans residues 438-439; it reads GG. Lys441 contacts substrate.

This sequence belongs to the ATP-dependent AMP-binding enzyme family. EntE subfamily. As to quaternary structure, proteins EntB, EntD, EntE, and EntF form a multienzyme complex called enterobactin synthase. Monomer. EntA and EntE interact together.

The protein localises to the membrane. It catalyses the reaction 3 2,3-dihydroxybenzoate + 3 L-serine + 6 ATP = enterobactin + 6 AMP + 6 diphosphate + 4 H(+). The catalysed reaction is 2,3-dihydroxybenzoate + holo-[ACP] + ATP = 2,3-dihydroxybenzoyl-[ACP] + AMP + diphosphate. The enzyme catalyses 2,3-dihydroxybenzoyl-5'-AMP + holo-[ACP] = 2,3-dihydroxybenzoyl-[ACP] + AMP + H(+). It functions in the pathway siderophore biosynthesis; enterobactin biosynthesis. Its activity is regulated as follows. Inhibited by the adenylate analogs, 5'-O-[N-(salicyl)sulfamoyl]adenosine (Sal-AMS) and 5'-O-[N-(2,3-dihydroxybenzoyl)sulfamoyl]adenosine (DHB-AMS). Adenylation of 2,3-dihydroxybenzoate (DHB) is enhanced by a protein-protein interaction between the EntA and EntE. Functionally, involved in the biosynthesis of the siderophore enterobactin (enterochelin), which is a macrocyclic trimeric lactone of N-(2,3-dihydroxybenzoyl)-serine. The serine trilactone serves as a scaffolding for the three catechol functionalities that provide hexadentate coordination for the tightly ligated iron(2+) atoms. EntE processes via a two-step adenylation-ligation reaction (bi-uni-uni-bi ping-pong mechanism). First, it catalyzes the activation of the carboxylate group of 2,3-dihydroxy-benzoate (DHB), via a reversible ATP-dependent pyrophosphate exchange reactions to yield the acyladenylate intermediate 2,3-dihydroxybenzoyl-AMP. It can also transfer AMP to salicylate, 2,4-dihydroxybenzoate, gentisate and 2,3,4-trihydroxybenzoate. In the second step, DHB is transferred from 2,3-dihydroxybenzoyl-AMP onto the phosphopantetheinylated EntB (holo-EntB) to form DHB-holo-EntB. Then this product will serve in the formation of the amide bond between 2,3-dihydroxybenzoate (DHB) and L-serine. It can also transfer adenylated salicylate to holo-EntB. In Escherichia coli (strain K12), this protein is Enterobactin synthase component E.